Here is a 71-residue protein sequence, read N- to C-terminus: Translation initiation factor IF-1 (71 aa).

Residues 1-71 form the S1-like domain; sequence MAKDAIKLRA…TKGRITYRHK (71 aa).

It belongs to the IF-1 family. Component of the 30S ribosomal translation pre-initiation complex which assembles on the 30S ribosome in the order IF-2 and IF-3, IF-1 and N-formylmethionyl-tRNA(fMet); mRNA recruitment can occur at any time during PIC assembly.

The protein localises to the cytoplasm. Functionally, one of the essential components for the initiation of protein synthesis. Stabilizes the binding of IF-2 and IF-3 on the 30S subunit to which N-formylmethionyl-tRNA(fMet) subsequently binds. Helps modulate mRNA selection, yielding the 30S pre-initiation complex (PIC). Upon addition of the 50S ribosomal subunit IF-1, IF-2 and IF-3 are released leaving the mature 70S translation initiation complex. The protein is Translation initiation factor IF-1 of Mycoplasmopsis synoviae (strain 53) (Mycoplasma synoviae).